Consider the following 1118-residue polypeptide: Sodium-driven chloride bicarbonate exchanger (1118 aa).

Disordered stretches follow at residues 1–23 and 58–97; these read MEIK…EEAV and GRKS…TPSQ. Residues 1-509 lie on the Cytoplasmic side of the membrane; sequence MEIKDQGAQM…DFRDAFSLQC (509 aa). Positions 59–76 are enriched in basic residues; sequence RKSHRRHRHRGHKHRKRD. A compositionally biased stretch (basic and acidic residues) spans 77-90; it reads RERDSGLEDGRESP. Phosphoserine is present on Ser-89. Thr-94 carries the phosphothreonine modification. Residues His-221 and His-223 each contribute to the Zn(2+) site. Disordered regions lie at residues 269–310 and 457–476; these read AENK…KGPP and NGTA…GPEL. Residue Ser-276 is modified to Phosphoserine. Residues 510–530 traverse the membrane as a helical segment; that stretch reads LASFLFLYCACMSPVITFGGL. The Extracellular segment spans residues 531–538; it reads LGEATEGR. The helical transmembrane segment at 539–559 threads the bilayer; sequence ISAIESLFGASMTGIAYSLFG. The Cytoplasmic segment spans residues 560–562; the sequence is GQP. Residues 563–583 form a helical membrane-spanning segment; sequence LTILGSTGPVLVFEKILFKFC. Topologically, residues 584 to 596 are extracellular; sequence KEYGLSYLSLRAS. The chain crosses the membrane as a helical span at residues 597–617; that stretch reads IGLWTATLCIILVATDASSLV. The Cytoplasmic segment spans residues 618-626; sequence CYITRFTEE. The chain crosses the membrane as a helical span at residues 627–647; that stretch reads AFASLICIIFIYEALEKLFEL. The Extracellular segment spans residues 648 to 720; it reads SETYPINMHN…VGRACGHGHP (73 aa). Residues Asn-677, Asn-687, and Asn-697 are each glycosylated (N-linked (GlcNAc...) asparagine). Residues 721–741 traverse the membrane as a helical segment; that stretch reads YVPDVLFWSVILFFSTVTMSA. Over 742 to 762 the chain is Cytoplasmic; sequence TLKQFKTSRYFPTKVRSIVSD. A helical membrane pass occupies residues 763–783; sequence FAVFLTILCMVLIDYAIGIPS. The Extracellular portion of the chain corresponds to 784 to 809; that stretch reads PKLQVPSVFKPTRDDRGWFVTPLGPN. The helical transmembrane segment at 810 to 830 threads the bilayer; it reads PWWTIIAAIIPALLCTILIFM. Residues 831–855 lie on the Cytoplasmic side of the membrane; it reads DQQITAVIINRKEHKLKKGCGYHLD. Residues 856 to 876 traverse the membrane as a helical segment; the sequence is LLMVAVMLGVCSIMGLPWFVA. Topologically, residues 877–912 are extracellular; that stretch reads ATVLSITHVNSLKLESECSAPGEQPKFLGIREQRVT. A helical membrane pass occupies residues 913 to 933; it reads GLMIFILMGSSVFMTSILKFI. At 934 to 935 the chain is on the cytoplasmic side; sequence PM. Residues 936–956 traverse the membrane as a helical segment; it reads PVLYGVFLYMGASSLKGIQLF. Over 957–998 the chain is Extracellular; that stretch reads DRIKLFWMPAKHQPDFIYLRHVPLRKVHLFTVIQMSCLGLLW. The helical transmembrane segment at 999–1019 threads the bilayer; that stretch reads IIKVSRAAIVFPMMVLALVFV. The Cytoplasmic segment spans residues 1020–1118; that stretch reads RKLMDFLFTK…SRFPSKSSPS (99 aa). Ser-1057 and Ser-1085 each carry phosphoserine.

It belongs to the anion exchanger (TC 2.A.31) family. In terms of processing, N-glycosylated. As to expression, in the brain, detected in cerebral cortex, subcortex, cerebellum, hippocampus and medulla (at protein level). In the cerebrum, expressed at high levels throughout the cortex, at lower levels in striatum and not detectable in the corpus callosum (at protein level). In the cerebellum, detected at high levels in the molecular layer but at very low levels in the granular layer (at protein level). In the central nervous system, detected in neurons in the olfactory bulb, cortex and cerebellum (at protein level). Within the hippocampus, abundantly expressed in CA3 pyramidal cells (at protein level). Strongly expressed in the retina with high levels in bipolar and amacrine cells (at protein level). Expressed in the epithelial cells of the choroid plexus. During embryonic development, expressed in neurons of the central nervous system. Also expressed in the peripheral nervous system and in non-neuronal tissues such as the dura and some epithelia including the acid-secreting epithelium of the stomach and the duodenal epithelium. In the embryonic retina, expression is restricted to the neuronal cell layer and the retinal pigment epithelium. In terms of tissue distribution, expressed at high levels in brain and at low levels in the pituitary, testis, kidney and ileum. Also expressed in pancreatic islets.

It localises to the basolateral cell membrane. The protein resides in the apical cell membrane. Its subcellular location is the cell projection. It is found in the dendrite. The protein localises to the axon. It localises to the perikaryon. The protein resides in the presynapse. Its subcellular location is the postsynapse. It catalyses the reaction 2 hydrogencarbonate(out) + chloride(in) + Na(+)(out) = 2 hydrogencarbonate(in) + chloride(out) + Na(+)(in). With respect to regulation, zinc-binding negatively regulates its activity. Its function is as follows. Sodium/bicarbonate cotransporter which plays an important role in regulating intracellular pH. Has been shown to act as a sodium/bicarbonate cotransporter in exchange for intracellular chloride. Has also been shown to act as a sodium/biocarbonate cotransporter which is not responsible for net efflux of chloride, with the observed chloride efflux being due to chloride self-exchange. Controls neuronal pH and may contribute to the secretion of cerebrospinal fluid. Acting on presynaptic intracellular pH, it promotes GABA release, reduces the excitability of CA1 pyramidal neurons, and modulates short-term synaptic plasticity. Required in retinal cells to maintain normal pH which is necessary for normal vision. In the kidney, likely to mediate bicarbonate reclamation in the apical membrane of the proximal tubules. In terms of biological role, sodium/bicarbonate cotransporter which mediates cotransport of sodium and bicarbonate in association with an efflux of intracellular chloride. The polypeptide is Sodium-driven chloride bicarbonate exchanger (Mus musculus (Mouse)).